The chain runs to 570 residues: Urease subunit alpha (570 aa).

Positions Gly-132–Phe-570 constitute a Urease domain. Ni(2+) is bound by residues His-137, His-139, and Lys-220. Position 220 is an N6-carboxylysine (Lys-220). His-222 contributes to the substrate binding site. Residues His-249 and His-275 each contribute to the Ni(2+) site. The active-site Proton donor is the His-323. Ni(2+) is bound at residue Asp-363.

This sequence belongs to the metallo-dependent hydrolases superfamily. Urease alpha subunit family. Heterotrimer of UreA (gamma), UreB (beta) and UreC (alpha) subunits. Three heterotrimers associate to form the active enzyme. Ni cation serves as cofactor. Carboxylation allows a single lysine to coordinate two nickel ions.

It is found in the cytoplasm. The catalysed reaction is urea + 2 H2O + H(+) = hydrogencarbonate + 2 NH4(+). Its pathway is nitrogen metabolism; urea degradation; CO(2) and NH(3) from urea (urease route): step 1/1. This chain is Urease subunit alpha, found in Corynebacterium glutamicum (strain ATCC 13032 / DSM 20300 / JCM 1318 / BCRC 11384 / CCUG 27702 / LMG 3730 / NBRC 12168 / NCIMB 10025 / NRRL B-2784 / 534).